We begin with the raw amino-acid sequence, 447 residues long: N-succinylarginine dihydrolase (447 aa).

Substrate is bound by residues 19–28 (AGLSFGNEAS), Asn-110, and 137–138 (HR). Glu-174 is an active-site residue. Arg-212 lines the substrate pocket. The active site involves His-248. Positions 250 and 359 each coordinate substrate. Cys-365 serves as the catalytic Nucleophile.

The protein belongs to the succinylarginine dihydrolase family. In terms of assembly, homodimer.

It carries out the reaction N(2)-succinyl-L-arginine + 2 H2O + 2 H(+) = N(2)-succinyl-L-ornithine + 2 NH4(+) + CO2. It participates in amino-acid degradation; L-arginine degradation via AST pathway; L-glutamate and succinate from L-arginine: step 2/5. Its function is as follows. Catalyzes the hydrolysis of N(2)-succinylarginine into N(2)-succinylornithine, ammonia and CO(2). This is N-succinylarginine dihydrolase from Escherichia coli O17:K52:H18 (strain UMN026 / ExPEC).